The chain runs to 83 residues: Bublin coiled-coil protein (83 aa).

Residues 1 to 25 (MSGPNGDLGTPVEAGAEGEEDGFGE) are disordered. A coiled-coil region spans residues 25-74 (EAEYAAINSMLDQINSCLDHLEEKNDHLHARLQELLESNRQTRLEFQQQL). Position 82 is a phosphoserine (Ser82).

It belongs to the UPF0184 (EST00098) family.

Its subcellular location is the cell junction. It localises to the cytoplasm. The protein resides in the cytoskeleton. Functionally, essential for intermediate filament organization in intestinal cells, interacts with intermediate filament and regulates intestinal lumen morphology. This Bos taurus (Bovine) protein is Bublin coiled-coil protein (BBLN).